Reading from the N-terminus, the 477-residue chain is UDP-N-acetylglucosamine pyrophosphorylase (477 aa).

The short motif at 109–112 is the Substrate binding element; it reads MAGG. UTP is bound by residues 109–112, lysine 123, and glutamine 194; that span reads MAGG. At serine 218 the chain carries Phosphoserine. Glycine 221 provides a ligand contact to UTP. Asparagine 222 contacts substrate. Aspartate 252 contributes to the UTP binding site. Residues 302–303 carry the Substrate binding motif; the sequence is EY. Lysine 377 is a UTP binding site. Lysine 409 is a binding site for substrate. Serine 461 is subject to Phosphoserine.

The protein belongs to the UDPGP type 1 family.

Its subcellular location is the cytoplasm. The enzyme catalyses N-acetyl-alpha-D-glucosamine 1-phosphate + UTP + H(+) = UDP-N-acetyl-alpha-D-glucosamine + diphosphate. It functions in the pathway nucleotide-sugar biosynthesis; UDP-N-acetyl-alpha-D-glucosamine biosynthesis; UDP-N-acetyl-alpha-D-glucosamine from N-acetyl-alpha-D-glucosamine 1-phosphate: step 1/1. Functionally, UDP-N-acetylglucosamine pyrophosphorylase that utilizes N-acetylglucosamine-1-phosphate as substrate. Together with AGM1, is involved in the production of UDP-N-acetylglucosamine from N-acetylglucosamine-6-phosphate. In Saccharomyces cerevisiae (strain ATCC 204508 / S288c) (Baker's yeast), this protein is UDP-N-acetylglucosamine pyrophosphorylase (QRI1).